The primary structure comprises 467 residues: tRNA modification GTPase MnmE (467 aa).

(6S)-5-formyl-5,6,7,8-tetrahydrofolate-binding residues include Arg27, Glu89, and Arg128. One can recognise a TrmE-type G domain in the interval 225-387; sequence GISMVIAGRP…LKQAIFTVVT (163 aa). Asn235 contributes to the K(+) binding site. Residues 235–240, 254–260, 279–282, and 368–370 contribute to the GTP site; these read NVGKSS, TSIAGTT, DTAG, and SAR. Position 239 (Ser239) interacts with Mg(2+). Residues Thr254, Ile256, and Thr259 each coordinate K(+). A Mg(2+)-binding site is contributed by Thr260. Residue Lys467 participates in (6S)-5-formyl-5,6,7,8-tetrahydrofolate binding.

The protein belongs to the TRAFAC class TrmE-Era-EngA-EngB-Septin-like GTPase superfamily. TrmE GTPase family. As to quaternary structure, homodimer. Heterotetramer of two MnmE and two MnmG subunits. It depends on K(+) as a cofactor.

The protein localises to the cytoplasm. Functionally, exhibits a very high intrinsic GTPase hydrolysis rate. Involved in the addition of a carboxymethylaminomethyl (cmnm) group at the wobble position (U34) of certain tRNAs, forming tRNA-cmnm(5)s(2)U34. The protein is tRNA modification GTPase MnmE of Desulfotalea psychrophila (strain LSv54 / DSM 12343).